The chain runs to 150 residues: Ribonuclease H (150 aa).

In terms of domain architecture, RNase H type-1 spans 1 to 142 (MSDSVEIFTD…ADQLANRGVD (142 aa)). Mg(2+) contacts are provided by D10, E48, D70, and D134.

This sequence belongs to the RNase H family. In terms of assembly, monomer. It depends on Mg(2+) as a cofactor.

The protein resides in the cytoplasm. It carries out the reaction Endonucleolytic cleavage to 5'-phosphomonoester.. In terms of biological role, endonuclease that specifically degrades the RNA of RNA-DNA hybrids. This chain is Ribonuclease H, found in Pseudomonas fluorescens (strain ATCC BAA-477 / NRRL B-23932 / Pf-5).